The chain runs to 121 residues: Aspartate 1-decarboxylase (121 aa).

The Schiff-base intermediate with substrate; via pyruvic acid role is filled by S25. S25 carries the pyruvic acid (Ser) modification. T57 contributes to the substrate binding site. Catalysis depends on Y58, which acts as the Proton donor. 73-75 provides a ligand contact to substrate; sequence GAA.

The protein belongs to the PanD family. In terms of assembly, heterooctamer of four alpha and four beta subunits. The cofactor is pyruvate. In terms of processing, is synthesized initially as an inactive proenzyme, which is activated by self-cleavage at a specific serine bond to produce a beta-subunit with a hydroxyl group at its C-terminus and an alpha-subunit with a pyruvoyl group at its N-terminus.

The protein resides in the cytoplasm. The enzyme catalyses L-aspartate + H(+) = beta-alanine + CO2. It participates in cofactor biosynthesis; (R)-pantothenate biosynthesis; beta-alanine from L-aspartate: step 1/1. Functionally, catalyzes the pyruvoyl-dependent decarboxylation of aspartate to produce beta-alanine. In Sulfurimonas denitrificans (strain ATCC 33889 / DSM 1251) (Thiomicrospira denitrificans (strain ATCC 33889 / DSM 1251)), this protein is Aspartate 1-decarboxylase.